Consider the following 93-residue polypeptide: Large ribosomal subunit protein uL23 (93 aa).

The protein belongs to the universal ribosomal protein uL23 family. Part of the 50S ribosomal subunit. Contacts protein L29, and trigger factor when it is bound to the ribosome.

Its function is as follows. One of the early assembly proteins it binds 23S rRNA. One of the proteins that surrounds the polypeptide exit tunnel on the outside of the ribosome. Forms the main docking site for trigger factor binding to the ribosome. The chain is Large ribosomal subunit protein uL23 from Helicobacter acinonychis (strain Sheeba).